The following is a 673-amino-acid chain: Vasorin (673 aa).

A signal peptide spans 1-23 (MCSRVPLLLPLLLLLALGPGVQG). The LRRNT domain occupies 24–51 (CPSGCQCSQPQTVFCTARQGTTVPRDVP). Residues 24-575 (CPSGCQCSQP…VTQAREGNLP (552 aa)) are Extracellular-facing. LRR repeat units follow at residues 52-74 (PDTV…SFAG), 77-98 (GLQL…VFQP), 101-122 (NLSN…TFRG), 125-146 (RLER…AFDT), 149-170 (RLLE…RLPR), 171-191 (LLLL…ILDT), 193-214 (NVEA…LFSR), 217-238 (NLHD…IRGL), 240-262 (GLTR…DLAG), and 265-287 (ALQE…SGLF). N101 carries N-linked (GlcNAc...) asparagine glycosylation. N117 carries an N-linked (GlcNAc...) (complex) asparagine glycan. N-linked (GlcNAc...) asparagine glycosylation occurs at N273. Residues 298 to 351 (NPFNCVCPLSWFGPWVRESHVTLASPEETRCHFPPKNAGRLLLELDYADFGCPA) form the LRRCT domain. A compositionally biased stretch (low complexity) spans 358–370 (VPTTRPVVREPTA). The disordered stretch occupies residues 358–404 (VPTTRPVVREPTALSSSLAPTWLSPTEPATEAPSPPSTAPPTVGPVP). A compositionally biased stretch (pro residues) spans 390-404 (PSPPSTAPPTVGPVP). Residues 405-442 (QPQDCPPSTCLNGGTCHLGTRHHLACLCPEGFTGLYCE) enclose the EGF-like domain. 3 disulfides stabilise this stretch: C409–C420, C414–C430, and C432–C441. The Fibronectin type-III domain occupies 460–558 (PPRSLTLGIE…ACGEAHTPPA (99 aa)). N-linked (GlcNAc...) asparagine glycans are attached at residues N500 and N528. The helical transmembrane segment at 576-596 (LLIAPALAAVLLAALAAVGAA) threads the bilayer. At 597–673 (YCVRRGRAMA…QSPLHAKPYI (77 aa)) the chain is on the cytoplasmic side.

In terms of assembly, interacts with TGFB1, TGFB2 and TGFB3. In terms of processing, N-glycosylated. N-glycan heterogeneity at Asn-117: Hex5HexNAc4 (minor), dHex1Hex5HexNAc4 (major), Hex6HexNAc5 (minor) and dHex1Hex6HexNAc5 (minor). Expressed at highest levels in aorta, at intermediate levels in kidney and placenta and at lowest levels in brain, heart, liver, lung and skeletal muscle. Within the aorta, the strongest expression is found in the tunica media of the proximal ascending aorta, the descending thoracic aorta, the abdominal aorta and the coronary arteries. Within the kidney, expression is found in the interstitial cells.

Its subcellular location is the membrane. It localises to the secreted. Functionally, may act as an inhibitor of TGF-beta signaling. The protein is Vasorin (VASN) of Homo sapiens (Human).